A 346-amino-acid chain; its full sequence is Sensor protein kinase GraS (346 aa).

The next 2 membrane-spanning stretches (helical) occupy residues 15–35 and 43–63; these read MNWI…SLID and LFYI…LTYF. A Histidine kinase domain is found at 126-332; that stretch reads EFVHDIKTPV…TVRLIFPLQN (207 aa).

As to quaternary structure, interacts with GraX.

It is found in the cell membrane. The catalysed reaction is ATP + protein L-histidine = ADP + protein N-phospho-L-histidine.. Its function is as follows. Member of the two-component regulatory system GraR/GraS involved in resistance against cationic antimicrobial peptides (CAMPs). Functions as a sensor protein kinase which phosphorylates GraR through the auxiliary protein GraX. In turn, GraR up-regulates many genes such as adhesins, exoproteins, transporters, toxins, and proteins involved in cell wall synthesis. Down-regulates the expression of many genes involved in RNA and amino acid synthesis or glycolysis. This Staphylococcus aureus (strain bovine RF122 / ET3-1) protein is Sensor protein kinase GraS (graS).